Here is a 415-residue protein sequence, read N- to C-terminus: All trans-polyprenyl-diphosphate synthase PDSS1 (415 aa).

Positions 16–35 (PAARSPGPGSPGRAGPLGPS) are disordered. The isopentenyl diphosphate site is built by Lys134, Arg137, and His173. Residues Asp180 and Asp184 each contribute to the Mg(2+) site. Arg190 serves as a coordination point for isopentenyl diphosphate.

Belongs to the FPP/GGPP synthase family. Heterotetramer composed of 2 PDSS1/DPS1 and 2 PDSS2/DLP1 subunits. It depends on Mg(2+) as a cofactor.

It localises to the mitochondrion. The enzyme catalyses 7 isopentenyl diphosphate + (2E,6E)-farnesyl diphosphate = all-trans-decaprenyl diphosphate + 7 diphosphate. The catalysed reaction is 6 isopentenyl diphosphate + (2E,6E)-farnesyl diphosphate = all-trans-nonaprenyl diphosphate + 6 diphosphate. It functions in the pathway cofactor biosynthesis; ubiquinone biosynthesis. Functionally, heterotetrameric enzyme that catalyzes the condensation of farnesyl diphosphate (FPP), which acts as a primer, and isopentenyl diphosphate (IPP) to produce prenyl diphosphates of varying chain lengths and participates in the determination of the side chain of ubiquinone. Supplies nona and decaprenyl diphosphate, the precursors for the side chain of the isoprenoid quinones ubiquinone-9 (Q9)and ubiquinone-10 (Q10) respectively. The enzyme adds isopentenyl diphosphate molecules sequentially to farnesyl diphosphate with trans stereochemistry. The protein is All trans-polyprenyl-diphosphate synthase PDSS1 of Homo sapiens (Human).